The primary structure comprises 635 residues: Chaperone protein DnaK (635 aa).

At Thr-198 the chain carries Phosphothreonine; by autocatalysis. A disordered region spans residues 597 to 635 (LYEQDQANNERHDTPETEKAEGDNVVDAEFQEIDDQDKK). A compositionally biased stretch (basic and acidic residues) spans 604-618 (NNERHDTPETEKAEG). A compositionally biased stretch (acidic residues) spans 620-635 (NVVDAEFQEIDDQDKK).

The protein belongs to the heat shock protein 70 family.

Its function is as follows. Acts as a chaperone. This Zymomonas mobilis subsp. mobilis (strain ATCC 31821 / ZM4 / CP4) protein is Chaperone protein DnaK.